The sequence spans 176 residues: ATP-dependent protease subunit HslV (176 aa).

Residue Thr-5 is part of the active site. Na(+) contacts are provided by Ser-161, Cys-164, and Thr-167.

The protein belongs to the peptidase T1B family. HslV subfamily. As to quaternary structure, a double ring-shaped homohexamer of HslV is capped on each side by a ring-shaped HslU homohexamer. The assembly of the HslU/HslV complex is dependent on binding of ATP.

It is found in the cytoplasm. It carries out the reaction ATP-dependent cleavage of peptide bonds with broad specificity.. Allosterically activated by HslU binding. Its function is as follows. Protease subunit of a proteasome-like degradation complex believed to be a general protein degrading machinery. The sequence is that of ATP-dependent protease subunit HslV from Desulfitobacterium hafniense (strain Y51).